The following is a 201-amino-acid chain: Pyridoxal 5'-phosphate synthase subunit PdxT (201 aa).

Gly51–Ser53 contacts L-glutamine. Cys83 functions as the Nucleophile in the catalytic mechanism. Residues Arg112 and Ile141–Arg142 each bind L-glutamine. Active-site charge relay system residues include His182 and Glu184.

This sequence belongs to the glutaminase PdxT/SNO family. In the presence of PdxS, forms a dodecamer of heterodimers. Only shows activity in the heterodimer.

It catalyses the reaction aldehydo-D-ribose 5-phosphate + D-glyceraldehyde 3-phosphate + L-glutamine = pyridoxal 5'-phosphate + L-glutamate + phosphate + 3 H2O + H(+). It carries out the reaction L-glutamine + H2O = L-glutamate + NH4(+). The protein operates within cofactor biosynthesis; pyridoxal 5'-phosphate biosynthesis. Catalyzes the hydrolysis of glutamine to glutamate and ammonia as part of the biosynthesis of pyridoxal 5'-phosphate. The resulting ammonia molecule is channeled to the active site of PdxS. The chain is Pyridoxal 5'-phosphate synthase subunit PdxT from Thermobifida fusca (strain YX).